The following is a 207-amino-acid chain: Holliday junction branch migration complex subunit RuvA (207 aa).

Residues 1 to 63 form a domain I region; the sequence is MIGMLKGRVE…QDAITLFGFL (63 aa). The segment at 64 to 142 is domain II; the sequence is DARSKRMFLQ…VDKIETGEPT (79 aa). The tract at residues 143-153 is flexible linker; the sequence is STQRIPTDKGV. Residues 153–207 form a domain III region; the sequence is VEQVVEGLMSLGWKQADAQQAVDSVISSSGIALPLEEGNVPTVLRLALTSLDRGR.

The protein belongs to the RuvA family. In terms of assembly, homotetramer. Forms an RuvA(8)-RuvB(12)-Holliday junction (HJ) complex. HJ DNA is sandwiched between 2 RuvA tetramers; dsDNA enters through RuvA and exits via RuvB. An RuvB hexamer assembles on each DNA strand where it exits the tetramer. Each RuvB hexamer is contacted by two RuvA subunits (via domain III) on 2 adjacent RuvB subunits; this complex drives branch migration. In the full resolvosome a probable DNA-RuvA(4)-RuvB(12)-RuvC(2) complex forms which resolves the HJ.

Its subcellular location is the cytoplasm. The RuvA-RuvB-RuvC complex processes Holliday junction (HJ) DNA during genetic recombination and DNA repair, while the RuvA-RuvB complex plays an important role in the rescue of blocked DNA replication forks via replication fork reversal (RFR). RuvA specifically binds to HJ cruciform DNA, conferring on it an open structure. The RuvB hexamer acts as an ATP-dependent pump, pulling dsDNA into and through the RuvAB complex. HJ branch migration allows RuvC to scan DNA until it finds its consensus sequence, where it cleaves and resolves the cruciform DNA. This Bifidobacterium animalis subsp. lactis (strain AD011) protein is Holliday junction branch migration complex subunit RuvA.